Reading from the N-terminus, the 254-residue chain is Sec-independent protein translocase protein TatCy (254 aa).

6 helical membrane passes run 24 to 44 (IVAL…KPII), 67 to 87 (LYVF…PVIL), 112 to 132 (VSIL…FPFV), 157 to 177 (FLLQ…ILMF), 187 to 207 (MFLA…AALI), and 212 to 232 (LLSH…SILI).

It belongs to the TatC family. As to quaternary structure, forms a complex with TatAy. Two types of complexes exist: one composed of TatAy and TatCy, and another composed only of TatAy.

It localises to the cell membrane. In terms of biological role, part of the twin-arginine translocation (Tat) system that transports large folded proteins containing a characteristic twin-arginine motif in their signal peptide across membranes. Required for YwbN secretion. In Bacillus subtilis (strain 168), this protein is Sec-independent protein translocase protein TatCy.